The following is a 427-amino-acid chain: Enolase (427 aa).

Gln163 is a (2R)-2-phosphoglycerate binding site. The Proton donor role is filled by Glu205. 3 residues coordinate Mg(2+): Asp242, Glu285, and Asp312. Positions 337, 366, 367, and 388 each coordinate (2R)-2-phosphoglycerate. The active-site Proton acceptor is the Lys337.

This sequence belongs to the enolase family. The cofactor is Mg(2+).

It localises to the cytoplasm. The protein resides in the secreted. The protein localises to the cell surface. The enzyme catalyses (2R)-2-phosphoglycerate = phosphoenolpyruvate + H2O. Its pathway is carbohydrate degradation; glycolysis; pyruvate from D-glyceraldehyde 3-phosphate: step 4/5. Its function is as follows. Catalyzes the reversible conversion of 2-phosphoglycerate (2-PG) into phosphoenolpyruvate (PEP). It is essential for the degradation of carbohydrates via glycolysis. The protein is Enolase of Nitrosospira multiformis (strain ATCC 25196 / NCIMB 11849 / C 71).